The primary structure comprises 469 residues: 6-phospho-beta-galactosidase (469 aa).

Glutamine 18, histidine 115, asparagine 158, glutamate 159, and asparagine 296 together coordinate D-galactose 6-phosphate. Glutamate 159 (proton donor) is an active-site residue. Glutamate 374 serves as the catalytic Nucleophile. Residues serine 429, tryptophan 430, lysine 436, and tyrosine 438 each contribute to the D-galactose 6-phosphate site.

Belongs to the glycosyl hydrolase 1 family.

The catalysed reaction is a 6-phospho-beta-D-galactoside + H2O = D-galactose 6-phosphate + an alcohol. It functions in the pathway carbohydrate metabolism; lactose degradation; D-galactose 6-phosphate and beta-D-glucose from lactose 6-phosphate: step 1/1. The polypeptide is 6-phospho-beta-galactosidase (Staphylococcus haemolyticus (strain JCSC1435)).